Consider the following 185-residue polypeptide: Ribosome-recycling factor (185 aa).

The protein belongs to the RRF family.

It localises to the cytoplasm. Its function is as follows. Responsible for the release of ribosomes from messenger RNA at the termination of protein biosynthesis. May increase the efficiency of translation by recycling ribosomes from one round of translation to another. This is Ribosome-recycling factor from Listeria monocytogenes serotype 4a (strain HCC23).